A 199-amino-acid polypeptide reads, in one-letter code: Photosystem II D1 precursor processing protein PSB27-H2, chloroplastic (199 aa).

This sequence belongs to the Psb27 family. Interacts with the C-terminus of both the precursor and mature form of D1.

The protein resides in the plastid. The protein localises to the chloroplast thylakoid lumen. In terms of biological role, required, but not essential, for D1 (psbA) precursor processing and thus correct photosystem II assembly (PSII). This chain is Photosystem II D1 precursor processing protein PSB27-H2, chloroplastic (PSB27-2), found in Arabidopsis thaliana (Mouse-ear cress).